The primary structure comprises 518 residues: MGSKGAERRKQATPGQTPEGNVVMSFSFESYQLEEEDCQGKDISDKGVLALSEPAFEEAVPDDRYHGIYFAMLLAGVGFLLPYNSFITDVDYLHHKFEGTSIVFDMGLTYILVALVAVILNNVLVEMLSLHTRITVGYLFALGPLLFVTIFDVWLERFTIKQAYVINLMSMGTVAFGCTVQQSSFYGYMGMLPKRYTQGVMTGESTAGVIISLSRIFTKLLIKDERKNTIIFFVISICMVLVCFILHLLVRRTRFVQYYTSLARRGLSHAKDHSQHASQYQVHHDVITEEGNGAVGCSPAGDGCADFAGGNTYVRFDVPKPKMKRSWPGVKDMILHRYVVARVIWTYMLSIAVTYFITLCLFPGLESEIKNATLGEWLPILIMAIFNISDFVGKILAAVPYEWNGTRLLFFSCVRVVFIPLFIMCVYPAQMPMFSHPAWPCIFSLFMGITNGYFGSVPMIHAAGKVAPEQRELAGNIMTVSYMSGLMLGSVVAYAAYSFTASGSSFHSQTGYNFTQGY.

Residues 1-10 (MGSKGAERRK) show a composition bias toward basic and acidic residues. Residues 1 to 21 (MGSKGAERRKQATPGQTPEGN) form a disordered region. The Extracellular portion of the chain corresponds to 1–66 (MGSKGAERRK…EEAVPDDRYH (66 aa)). The helical transmembrane segment at 67 to 87 (GIYFAMLLAGVGFLLPYNSFI) threads the bilayer. Residues 88-99 (TDVDYLHHKFEG) lie on the Cytoplasmic side of the membrane. A helical transmembrane segment spans residues 100–120 (TSIVFDMGLTYILVALVAVIL). The Extracellular portion of the chain corresponds to 121–133 (NNVLVEMLSLHTR). The helical transmembrane segment at 134–154 (ITVGYLFALGPLLFVTIFDVW) threads the bilayer. At 155–157 (LER) the chain is on the cytoplasmic side. The helical transmembrane segment at 158–178 (FTIKQAYVINLMSMGTVAFGC) threads the bilayer. Residues 179–198 (TVQQSSFYGYMGMLPKRYTQ) are Extracellular-facing. A helical transmembrane segment spans residues 199–218 (GVMTGESTAGVIISLSRIFT). Over 219–229 (KLLIKDERKNT) the chain is Cytoplasmic. A helical membrane pass occupies residues 230–250 (IIFFVISICMVLVCFILHLLV). The Extracellular segment spans residues 251 to 342 (RRTRFVQYYT…MILHRYVVAR (92 aa)). The helical transmembrane segment at 343–363 (VIWTYMLSIAVTYFITLCLFP) threads the bilayer. Over 364-376 (GLESEIKNATLGE) the chain is Cytoplasmic. Residues 377–397 (WLPILIMAIFNISDFVGKILA) form a helical membrane-spanning segment. The Extracellular portion of the chain corresponds to 398–407 (AVPYEWNGTR). The helical transmembrane segment at 408–428 (LLFFSCVRVVFIPLFIMCVYP) threads the bilayer. Residues 429–439 (AQMPMFSHPAW) are Cytoplasmic-facing. The chain crosses the membrane as a helical span at residues 440–460 (PCIFSLFMGITNGYFGSVPMI). Residues 461–476 (HAAGKVAPEQRELAGN) lie on the Extracellular side of the membrane. The helical transmembrane segment at 477 to 497 (IMTVSYMSGLMLGSVVAYAAY) threads the bilayer. Residues 498 to 518 (SFTASGSSFHSQTGYNFTQGY) lie on the Cytoplasmic side of the membrane.

It belongs to the SLC29A/ENT transporter (TC 2.A.57) family.

It localises to the membrane. Its function is as follows. Functions as a polyspecific organic cation transporter, efficiently transporting many organic cations such as monoamine neurotransmitters 1-methyl-4-phenylpyridinium and biogenic amines including serotonin, dopamine, norepinephrine and epinephrine. May play a role in regulating central nervous system homeostasis of monoamine neurotransmitters. May be involved in luminal transport of organic cations in the kidney and seems to use luminal proton gradient to drive organic cation reabsorption. Does not seem to transport nucleoside and nucleoside analogs such as uridine, cytidine, thymidine, adenosine, inosine, guanosine, and azidothymidine. This chain is Equilibrative nucleoside transporter 4 (slc29a4), found in Danio rerio (Zebrafish).